The sequence spans 196 residues: Holliday junction branch migration complex subunit RuvA (196 aa).

The interval 1–63 (MISFVSGRVA…EDSLTLYGFA (63 aa)) is domain I. Positions 64–136 (DDDERTVFEL…LKDRLGTPST (73 aa)) are domain II. A flexible linker region spans residues 136–140 (TAAAE). The segment at 141-196 (STSGWRDAVHAGLLNLGYTARQADEAIAAIAGELDDSAAVDTATALRLALATLKRP) is domain III.

This sequence belongs to the RuvA family. In terms of assembly, homotetramer. Forms an RuvA(8)-RuvB(12)-Holliday junction (HJ) complex. HJ DNA is sandwiched between 2 RuvA tetramers; dsDNA enters through RuvA and exits via RuvB. An RuvB hexamer assembles on each DNA strand where it exits the tetramer. Each RuvB hexamer is contacted by two RuvA subunits (via domain III) on 2 adjacent RuvB subunits; this complex drives branch migration. In the full resolvosome a probable DNA-RuvA(4)-RuvB(12)-RuvC(2) complex forms which resolves the HJ.

Its subcellular location is the cytoplasm. In terms of biological role, the RuvA-RuvB-RuvC complex processes Holliday junction (HJ) DNA during genetic recombination and DNA repair, while the RuvA-RuvB complex plays an important role in the rescue of blocked DNA replication forks via replication fork reversal (RFR). RuvA specifically binds to HJ cruciform DNA, conferring on it an open structure. The RuvB hexamer acts as an ATP-dependent pump, pulling dsDNA into and through the RuvAB complex. HJ branch migration allows RuvC to scan DNA until it finds its consensus sequence, where it cleaves and resolves the cruciform DNA. This is Holliday junction branch migration complex subunit RuvA from Acidothermus cellulolyticus (strain ATCC 43068 / DSM 8971 / 11B).